A 494-amino-acid polypeptide reads, in one-letter code: UPF0371 protein M6_Spy1067 (494 aa).

The protein belongs to the UPF0371 family.

The chain is UPF0371 protein M6_Spy1067 from Streptococcus pyogenes serotype M6 (strain ATCC BAA-946 / MGAS10394).